The following is a 505-amino-acid chain: Maturase K (505 aa).

It belongs to the intron maturase 2 family. MatK subfamily.

It is found in the plastid. The protein resides in the chloroplast. In terms of biological role, usually encoded in the trnK tRNA gene intron. Probably assists in splicing its own and other chloroplast group II introns. This is Maturase K from Cubanola domingensis.